The chain runs to 611 residues: Pseudomonine synthase PmsE (611 aa).

Positions 533-608 (VSVENTRTWL…SWWALVEARQ (76 aa)) constitute a Carrier domain. Position 569 is an O-(pantetheine 4'-phosphoryl)serine (serine 569).

Belongs to the ATP-dependent AMP-binding enzyme family. Pantetheine 4'-phosphate serves as cofactor.

It catalyses the reaction salicylate + holo-[ACP] + ATP = salicyl-[ACP] + AMP + diphosphate. It participates in siderophore biosynthesis; pseudomonine biosynthesis. Its function is as follows. Involved in the biosynthesis of the siderophore pseudomonine. Specifically adenylates salicylate and loads it onto its peptidyl carrier domain, via a thioester linkage to the phosphopanthetheine moiety. This Pseudomonas entomophila (strain L48) protein is Pseudomonine synthase PmsE.